Consider the following 42-residue polypeptide: Photosystem I reaction center subunit IX (42 aa).

Residues 7-27 (FLSSAPVLIMALLTFTAGILI) traverse the membrane as a helical segment.

The protein belongs to the PsaJ family.

It localises to the cellular thylakoid membrane. Functionally, may help in the organization of the PsaE and PsaF subunits. This is Photosystem I reaction center subunit IX from Microcystis aeruginosa (strain NIES-843 / IAM M-2473).